A 189-amino-acid polypeptide reads, in one-letter code: Elongation factor P (189 aa).

The protein belongs to the elongation factor P family.

It localises to the cytoplasm. It functions in the pathway protein biosynthesis; polypeptide chain elongation. Its function is as follows. Involved in peptide bond synthesis. Stimulates efficient translation and peptide-bond synthesis on native or reconstituted 70S ribosomes in vitro. Probably functions indirectly by altering the affinity of the ribosome for aminoacyl-tRNA, thus increasing their reactivity as acceptors for peptidyl transferase. This is Elongation factor P from Rhizobium etli (strain ATCC 51251 / DSM 11541 / JCM 21823 / NBRC 15573 / CFN 42).